A 496-amino-acid chain; its full sequence is Cytochrome P450 71B14 (496 aa).

A helical transmembrane segment spans residues 1 to 21 (MIWWFIVGASFFFAFILIAKD). C436 contacts heme.

Belongs to the cytochrome P450 family. The cofactor is heme.

The protein resides in the membrane. This is Cytochrome P450 71B14 (CYP71B14) from Arabidopsis thaliana (Mouse-ear cress).